The chain runs to 354 residues: Guanine nucleotide-binding protein G(t) subunit alpha-3 (354 aa).

The disordered stretch occupies residues 1 to 26 (MGIGISSESKESAKRSKELEKKLQED). The N-myristoyl glycine moiety is linked to residue Gly-2. Basic and acidic residues predominate over residues 8–26 (ESKESAKRSKELEKKLQED). The region spanning 32–354 (RTVKLLLLGA…KENLKDCGLF (323 aa)) is the G-alpha domain. Residues 35-48 (KLLLLGAGESGKST) are G1 motif. Residues 40 to 47 (GAGESGKS), 175 to 181 (LHSRVKT), 200 to 204 (DVGGQ), 269 to 272 (NKKD), and Ala-326 each bind GTP. Mg(2+) is bound by residues Ser-47 and Thr-181. Residues 173 to 181 (DVLHSRVKT) form a G2 motif region. Residues 196–205 (FRMFDVGGQR) are G3 motif. A G4 motif region spans residues 265–272 (VLFLNKKD). The G5 motif stretch occupies residues 324 to 329 (TCATDT).

It belongs to the G-alpha family. G(i/o/t/z) subfamily. As to quaternary structure, g proteins are composed of 3 units; alpha, beta and gamma, respectively GNAT3, GNB1 and GNG13 for Gustducin heterotrimer for bitter taste transduction. The alpha chain contains the guanine nucleotide binding site. Component of the TAS2R14-GNAT3 complex, consisting of TAS2R14, GNAT3, GNB1 and GNG2; within the complex interacts with TAS2R14; this complex plays a role in the perception of bitterness. Gustducin heterotrimer may also be composed of GNAT3, GNB3 and GNG13. Expressed in epithelial cells of taste buds of the circumvallate, foliate and fungiform. Detected in various region of the respiratory track. Expressed also in spermatozoa.

It localises to the cytoplasm. Its function is as follows. Guanine nucleotide-binding protein (G protein) alpha subunit playing a prominent role in bitter and sweet taste transduction as well as in umami (monosodium glutamate, monopotassium glutamate, and inosine monophosphate) taste transduction. The sequence is that of Guanine nucleotide-binding protein G(t) subunit alpha-3 (GNAT3) from Bos taurus (Bovine).